The following is a 332-amino-acid chain: UDP-N-acetylenolpyruvoylglucosamine reductase (332 aa).

The FAD-binding PCMH-type domain occupies R45–L243. R194 is an active-site residue. The active-site Proton donor is S250. E320 is a catalytic residue.

The protein belongs to the MurB family. It depends on FAD as a cofactor.

The protein localises to the cytoplasm. It catalyses the reaction UDP-N-acetyl-alpha-D-muramate + NADP(+) = UDP-N-acetyl-3-O-(1-carboxyvinyl)-alpha-D-glucosamine + NADPH + H(+). It participates in cell wall biogenesis; peptidoglycan biosynthesis. Functionally, cell wall formation. The chain is UDP-N-acetylenolpyruvoylglucosamine reductase from Nitrosomonas eutropha (strain DSM 101675 / C91 / Nm57).